The sequence spans 216 residues: MARIIDLVPWEDGSTHVYASPAILLPIPRRRNQLAGVKQQLYHPALPSLRRMDMDSVKACLSDEHCQSTTYCRKDDFDNAYFTLLGVPNKPLQCLDITETGQRLRNRYHEGKLAPIAPGINRVDWPCFTRAIEDWSRFVSSAGEFKLPCASKKVESFSGYAVRYLKPEVTQSWRFCLNQNPSLDRYGQKPLPFDSLNAFRRFGSNYSRVNYLTPWH.

Microtubule inner protein component of sperm flagellar doublet microtubules. Expressed in sperm.

The protein resides in the cytoplasm. It is found in the cytoskeleton. The protein localises to the flagellum axoneme. In terms of biological role, microtubule inner protein (MIP) part of the dynein-decorated doublet microtubules (DMTs) in flagellum axoneme. May serve to reinforce and thus stabilize the microtubule structure in the sperm flagella. In Bos taurus (Bovine), this protein is Sperm microtubule inner protein 8 (SPMIP8).